Reading from the N-terminus, the 293-residue chain is Proline iminopeptidase (293 aa).

The region spanning 28-277 (PLVLLHGGPG…NCSHMSFVQK (250 aa)) is the AB hydrolase-1 domain. Residue S105 is the Nucleophile of the active site. The active site involves D244. H271 (proton donor) is an active-site residue.

The protein belongs to the peptidase S33 family.

The protein localises to the cell envelope. It carries out the reaction Release of N-terminal proline from a peptide.. Releases the N-terminal proline from various substrates. The polypeptide is Proline iminopeptidase (Lactobacillus acidophilus (strain ATCC 700396 / NCK56 / N2 / NCFM)).